A 231-amino-acid chain; its full sequence is Probable glutathione S-transferase GSTU1 (231 aa).

The GST N-terminal domain maps to 5-84 (KELVLLDFWV…YLDDAFPGTP (80 aa)). Glutathione contacts are provided by residues serine 15, lysine 42, isoleucine 56, and 68-69 (ES). A GST C-terminal domain is found at 97–220 (AAYARATARF…LPSPEKVYDF (124 aa)).

This sequence belongs to the GST superfamily. Tau family.

The catalysed reaction is RX + glutathione = an S-substituted glutathione + a halide anion + H(+). In terms of biological role, conjugation of reduced glutathione to a wide number of exogenous and endogenous hydrophobic electrophiles. In Oryza sativa subsp. indica (Rice), this protein is Probable glutathione S-transferase GSTU1 (GSTU1).